A 272-amino-acid chain; its full sequence is Phosphoribosylformylglycinamidine synthase subunit PurQ (272 aa).

A Glutamine amidotransferase type-1 domain is found at 8–272; that stretch reads VLVMSGYGIN…FKNAVEYFNK (265 aa). The active-site Nucleophile is Cys98. Catalysis depends on residues His225, Glu227, and Glu235.

As to quaternary structure, part of the FGAM synthase complex composed of 1 PurL, 1 PurQ and 2 PurS subunits.

The protein localises to the cytoplasm. The catalysed reaction is N(2)-formyl-N(1)-(5-phospho-beta-D-ribosyl)glycinamide + L-glutamine + ATP + H2O = 2-formamido-N(1)-(5-O-phospho-beta-D-ribosyl)acetamidine + L-glutamate + ADP + phosphate + H(+). It carries out the reaction L-glutamine + H2O = L-glutamate + NH4(+). Its pathway is purine metabolism; IMP biosynthesis via de novo pathway; 5-amino-1-(5-phospho-D-ribosyl)imidazole from N(2)-formyl-N(1)-(5-phospho-D-ribosyl)glycinamide: step 1/2. In terms of biological role, part of the phosphoribosylformylglycinamidine synthase complex involved in the purines biosynthetic pathway. Catalyzes the ATP-dependent conversion of formylglycinamide ribonucleotide (FGAR) and glutamine to yield formylglycinamidine ribonucleotide (FGAM) and glutamate. The FGAM synthase complex is composed of three subunits. PurQ produces an ammonia molecule by converting glutamine to glutamate. PurL transfers the ammonia molecule to FGAR to form FGAM in an ATP-dependent manner. PurS interacts with PurQ and PurL and is thought to assist in the transfer of the ammonia molecule from PurQ to PurL. The chain is Phosphoribosylformylglycinamidine synthase subunit PurQ from Methanococcus maripaludis (strain DSM 14266 / JCM 13030 / NBRC 101832 / S2 / LL).